We begin with the raw amino-acid sequence, 259 residues long: AA9 family lytic polysaccharide monooxygenase E (259 aa).

An N-terminal signal peptide occupies residues 1–20; that stretch reads MKATVLAGLAAVIAAQGVAG. Cu(2+) contacts are provided by His-21 and His-99. The cysteines at positions 69 and 193 are disulfide-linked. O2 is bound by residues His-179 and Gln-188. Tyr-190 is a binding site for Cu(2+).

It belongs to the polysaccharide monooxygenase AA9 family. It depends on Cu(2+) as a cofactor.

The protein resides in the secreted. It carries out the reaction [(1-&gt;4)-beta-D-glucosyl]n+m + reduced acceptor + O2 = 4-dehydro-beta-D-glucosyl-[(1-&gt;4)-beta-D-glucosyl]n-1 + [(1-&gt;4)-beta-D-glucosyl]m + acceptor + H2O.. Lytic polysaccharide monooxygenase (LPMO) that depolymerizes crystalline and amorphous polysaccharides via the oxidation of scissile alpha- or beta-(1-4)-glycosidic bonds, yielding C1 or C4 oxidation products. Catalysis by LPMOs requires the reduction of the active-site copper from Cu(II) to Cu(I) by a reducing agent and H(2)O(2) or O(2) as a cosubstrate. This Malbranchea cinnamomea (Thermophilic fungus) protein is AA9 family lytic polysaccharide monooxygenase E.